We begin with the raw amino-acid sequence, 517 residues long: Glutamate--tRNA ligase (517 aa).

The 'HIGH' region motif lies at 10–20; the sequence is PSPSGFLHVGG. Zn(2+)-binding residues include C107, C109, C134, and D136. Positions 250 to 254 match the 'KMSKS' region motif; that stretch reads KLSKR. Residue K253 participates in ATP binding.

This sequence belongs to the class-I aminoacyl-tRNA synthetase family. Glutamate--tRNA ligase type 1 subfamily. As to quaternary structure, monomer. It depends on Zn(2+) as a cofactor.

It is found in the cytoplasm. The enzyme catalyses tRNA(Glu) + L-glutamate + ATP = L-glutamyl-tRNA(Glu) + AMP + diphosphate. Its function is as follows. Catalyzes the attachment of glutamate to tRNA(Glu) in a two-step reaction: glutamate is first activated by ATP to form Glu-AMP and then transferred to the acceptor end of tRNA(Glu). The sequence is that of Glutamate--tRNA ligase from Leptospira biflexa serovar Patoc (strain Patoc 1 / ATCC 23582 / Paris).